The primary structure comprises 633 residues: Pesticidal crystal protein Cry2Aa (633 aa).

Belongs to the delta endotoxin family.

Functionally, promotes colloidosmotic lysis by binding to the midgut epithelial cells of both dipteran (Aedes aegypti) and lepidopteran (Manduca sexta) larvae. The polypeptide is Pesticidal crystal protein Cry2Aa (cry2Aa) (Bacillus thuringiensis subsp. kenyae).